A 183-amino-acid chain; its full sequence is Photosystem I assembly protein Ycf4 (183 aa).

A run of 2 helical transmembrane segments spans residues 23 to 43 and 64 to 84; these read WASV…SSYF and VMSF…LTII.

The protein belongs to the Ycf4 family.

The protein resides in the plastid. It localises to the chloroplast thylakoid membrane. In terms of biological role, seems to be required for the assembly of the photosystem I complex. This Stigeoclonium helveticum (Green alga) protein is Photosystem I assembly protein Ycf4.